Consider the following 294-residue polypeptide: 4-hydroxy-tetrahydrodipicolinate synthase (294 aa).

A pyruvate-binding site is contributed by threonine 45. Tyrosine 133 functions as the Proton donor/acceptor in the catalytic mechanism. Lysine 161 serves as the catalytic Schiff-base intermediate with substrate. Residue isoleucine 203 participates in pyruvate binding.

The protein belongs to the DapA family. As to quaternary structure, homotetramer; dimer of dimers.

Its subcellular location is the cytoplasm. It carries out the reaction L-aspartate 4-semialdehyde + pyruvate = (2S,4S)-4-hydroxy-2,3,4,5-tetrahydrodipicolinate + H2O + H(+). Its pathway is amino-acid biosynthesis; L-lysine biosynthesis via DAP pathway; (S)-tetrahydrodipicolinate from L-aspartate: step 3/4. Catalyzes the condensation of (S)-aspartate-beta-semialdehyde [(S)-ASA] and pyruvate to 4-hydroxy-tetrahydrodipicolinate (HTPA). In Buchnera aphidicola subsp. Schizaphis graminum (strain Sg), this protein is 4-hydroxy-tetrahydrodipicolinate synthase.